The following is a 124-amino-acid chain: Small ribosomal subunit protein uS13 (124 aa).

The segment at 95 to 124 (GLPVRGQRTKTNARTRKGPKRTIAGKKKAR) is disordered.

This sequence belongs to the universal ribosomal protein uS13 family. In terms of assembly, part of the 30S ribosomal subunit. Forms a loose heterodimer with protein S19. Forms two bridges to the 50S subunit in the 70S ribosome.

In terms of biological role, located at the top of the head of the 30S subunit, it contacts several helices of the 16S rRNA. In the 70S ribosome it contacts the 23S rRNA (bridge B1a) and protein L5 of the 50S subunit (bridge B1b), connecting the 2 subunits; these bridges are implicated in subunit movement. Contacts the tRNAs in the A and P-sites. This Mycobacterium sp. (strain JLS) protein is Small ribosomal subunit protein uS13.